Reading from the N-terminus, the 217-residue chain is ITG-like peptide (217 aa).

Residues 1–21 (MHRTMAVTAVLVLSAAGAAHA) form the signal peptide. A propeptide spanning residues 22 to 208 (WGGLFNRFSS…REFVQHTAGE (187 aa)) is cleaved from the precursor.

In terms of tissue distribution, ITG-like peptide: Expressed in corpora cardiaca (CC), corpora allata (CA), antennal lobe (AL) and gnathal ganglion (GNG) (at protein level). Expression in AL detected in all animals, expression in GNG detected in most animals and in CA and CC detected in few animals (at protein level).

It is found in the secreted. The chain is ITG-like peptide from Agrotis ipsilon (Black cutworm moth).